A 1057-amino-acid chain; its full sequence is MIDVNNFHYMKIGLASPEKIRSWSFGEVKKPETINYRTLKPEKDGLFCERIFGPTKDWECSCGKYKRVRYKGMVCDRCGVEVTKSKVRRERMGHIELAAPVSHIWYFKGIPSRMGLLLDMSPRALEEVIYFASYVVVDPGPTGLEKKTLLSEAEFRDYYDKYPGQFVAKMGAEGIKDLLEEIDLDEELKLLRDELESATGQRLTRAIKRLEVVESFRNSGNKPSWMILDVLPIIPPEIRPMAQLDGGRFATSDLNDLYRRVINRNNRLKRLLDLGAPGIIVQNEKRMLQEAVDALIDNGRRGRPVTGPGNRPLKSLSHMLKGKQGRFRQNLLGKRVDYSGRSVIAVGPSLKMYQCGLPKEMALELFKPFVMKELVQREIATNIKNAKSKIERMDDEVWDVLEEVIREHPVLLNRAPTLHRLGIQAFEPTLVEGRAIRLHPLVTTAYNADFDGDQMAVHVPLSKEAQAEARMLMLAAQNILNPKDGKPVVTPSQDMVLGNYYLTLERKDAVNTGAIFNNTNEVLKAYANGFVHLHTRIGVHASSFNNPTFTEEQNKKILATSVGKIIFNEIIPDSFAYINEPTQENLERKTPNRNFIDPTTLGEGGLKEYFENEELIEPFNKKFLGNIIAEVFNRFSITDTSMMLDRMKDLGFKFSSKAGITVGVADIVVLPDKQQILDEHEKLVDRITKQFNRGLITEEERYNAVVEIWTDAKDQIQGELMQSLDKTNPIFMMSDSGARGNASNFTQLAGMRGLMAAPSGKIIELPITSSFREGLTVLEYFISTHGARKGLADTALKTADSGYLTRRLVDVAQDVIVREEDCGTDRGLLVSDIKEGTEMIEPFIERIEGRYSKETIRHPETDEIIIRPDELITPEIAKKITDAGIEQMYIRSAFTCNARHGVCEKCYGKNLATGEKVEVGEAVGTIAAQSIGEPGTQLTMRTFHTGGVAGSDITQGLPRIQEIFEARNPKGQAVITEIEGVVEDIKLAKDRQQEIVVKGANETRSYLASGTSRIIVEIGQPVQRGEVLTEGSIEPKNYLSVAGLNATESYLLKEVQK.

Positions 60, 62, 75, and 78 each coordinate Zn(2+). Residues aspartate 449, aspartate 451, and aspartate 453 each coordinate Mg(2+). Zn(2+) is bound by residues cysteine 822, cysteine 896, cysteine 903, and cysteine 906.

This sequence belongs to the RNA polymerase beta' chain family. As to quaternary structure, the RNAP catalytic core consists of 2 alpha, 1 beta, 1 beta' and 1 omega subunit. When a sigma factor is associated with the core the holoenzyme is formed, which can initiate transcription. Requires Mg(2+) as cofactor. Zn(2+) is required as a cofactor.

It carries out the reaction RNA(n) + a ribonucleoside 5'-triphosphate = RNA(n+1) + diphosphate. Functionally, DNA-dependent RNA polymerase catalyzes the transcription of DNA into RNA using the four ribonucleoside triphosphates as substrates. The polypeptide is DNA-directed RNA polymerase subunit beta' (Staphylococcus aureus).